A 1054-amino-acid chain; its full sequence is FERM, ARHGEF and pleckstrin domain-containing protein 2 (1054 aa).

Residues 44-324 (LHLRVKLLDN…EYHTFFRLLD (281 aa)) form the FERM domain. A phosphoserine mark is found at serine 389 and serine 439. Residues 421–527 (EFKDSSSSLT…GAGMDCEEPR (107 aa)) form a disordered region. Low complexity predominate over residues 468 to 492 (PGPGLSTKSPQPSPSSRKSPLSLSP). A DH domain is found at 535–726 (EAYFIVKEIL…TEVTTTLQHI (192 aa)). Residues 755-852 (EFIREGCLHK…WMLDLNSAIQ (98 aa)) enclose the PH 1 domain. The interval 856–894 (SGGDTAPALPGRTVCTRPPRSPNEVSLEQESEDDARGVR) is disordered. The PH 2 domain maps to 929–1026 (ENQLSGYLLR…WMEVIQGASS (98 aa)). The interval 1029-1054 (GRAPSIVQDGPQPSSGLEGMVRGKEE) is disordered.

As to quaternary structure, interacts with PLXNA1. Interaction with PLXNA1 or PIP5K1C lowers its guanine nucleotide exchange activity. Dissociates from PLXNA1 when SEMA3A binds to the receptor. Interacts with PIP5K1C via its FERM domain. The interaction with PIP5K1C is enhanced by SEMA3A binding. Interacts with RAC1.

Functions as a guanine nucleotide exchange factor that activates RAC1. May have relatively low activity. Plays a role in the response to class 3 semaphorins and remodeling of the actin cytoskeleton. Plays a role in TNFSF11-mediated osteoclast differentiation, especially in podosome rearrangement and reorganization of the actin cytoskeleton. Regulates the activation of ITGB3, integrin signaling and cell adhesion. This chain is FERM, ARHGEF and pleckstrin domain-containing protein 2 (FARP2), found in Homo sapiens (Human).